The chain runs to 378 residues: Pre-B-cell leukemia transcription factor 4 (378 aa).

A compositionally biased stretch (pro residues) spans 1–15 (MAAPLRPVPPQPAPR). 2 disordered regions span residues 1–24 (MAAP…APLG) and 100–125 (VSRP…PNDN). The PBC domain occupies 22 to 214 (PLGHDTSDVL…VMTLRSRFLD (193 aa)). Positions 29–107 (DVLQQIMAIT…EGVSRPEKRG (79 aa)) are PBC-A. Residues 109 to 120 (GAAAGSTATPGG) show a composition bias toward low complexity. Residues 110-214 (AAAGSTATPG…VMTLRSRFLD (105 aa)) form a PBC-B region. Residues 215-277 (ARRKRRNFSK…NKRIRYKKNT (63 aa)) constitute a DNA-binding region (homeobox; TALE-type). Disordered stretches follow at residues 291–320 (ASTV…PLPL) and 355–378 (RAAP…AASN). Positions 356–370 (AAPQPASSPAGESGS) are enriched in low complexity.

This sequence belongs to the TALE/PBX homeobox family. As to expression, almost exclusively expressed in testis.

The protein resides in the nucleus. The sequence is that of Pre-B-cell leukemia transcription factor 4 (Pbx4) from Mus musculus (Mouse).